The sequence spans 172 residues: MTDKKENKMREVKIAKLVINCCVGESGDKLTKAAKVLKDLSGQEPVFSRARYTIRSFGIKRNEKMAVHVTIRGDKARDILTRGLKVKEMELRKKNFSNTGNFGFGIQEHIDLGMKYDPSTGIFGMDFYVVLERPGTRVARRRRATSRVGNNQMISKEECINWFKTEFEGNVY.

It belongs to the universal ribosomal protein uL5 family. In terms of assembly, component of the large ribosomal subunit.

It is found in the nucleus. The protein resides in the cytoplasm. Component of the ribosome, a large ribonucleoprotein complex responsible for the synthesis of proteins in the cell. The small ribosomal subunit (SSU) binds messenger RNAs (mRNAs) and translates the encoded message by selecting cognate aminoacyl-transfer RNA (tRNA) molecules. The large subunit (LSU) contains the ribosomal catalytic site termed the peptidyl transferase center (PTC), which catalyzes the formation of peptide bonds, thereby polymerizing the amino acids delivered by tRNAs into a polypeptide chain. The nascent polypeptides leave the ribosome through a tunnel in the LSU and interact with protein factors that function in enzymatic processing, targeting, and the membrane insertion of nascent chains at the exit of the ribosomal tunnel. The protein is Large ribosomal subunit protein uL5 (RPL11) of Tetrahymena thermophila.